We begin with the raw amino-acid sequence, 426 residues long: Serine--tRNA ligase (426 aa).

The span at 1–15 (MIDVKDLSENPDKFR) shows a compositional bias: basic and acidic residues. Residues 1–22 (MIDVKDLSENPDKFRASQRARG) are disordered. Residue 228–230 (TSE) participates in L-serine binding. Residues 259 to 261 (RRE) and valine 275 each bind ATP. Glutamate 282 provides a ligand contact to L-serine. Residue 346 to 349 (ELTS) participates in ATP binding. Threonine 386 contributes to the L-serine binding site.

This sequence belongs to the class-II aminoacyl-tRNA synthetase family. Type-1 seryl-tRNA synthetase subfamily. As to quaternary structure, homodimer. The tRNA molecule binds across the dimer.

It is found in the cytoplasm. The enzyme catalyses tRNA(Ser) + L-serine + ATP = L-seryl-tRNA(Ser) + AMP + diphosphate + H(+). It catalyses the reaction tRNA(Sec) + L-serine + ATP = L-seryl-tRNA(Sec) + AMP + diphosphate + H(+). Its pathway is aminoacyl-tRNA biosynthesis; selenocysteinyl-tRNA(Sec) biosynthesis; L-seryl-tRNA(Sec) from L-serine and tRNA(Sec): step 1/1. Functionally, catalyzes the attachment of serine to tRNA(Ser). Is also able to aminoacylate tRNA(Sec) with serine, to form the misacylated tRNA L-seryl-tRNA(Sec), which will be further converted into selenocysteinyl-tRNA(Sec). The polypeptide is Serine--tRNA ligase (Pseudarthrobacter chlorophenolicus (strain ATCC 700700 / DSM 12829 / CIP 107037 / JCM 12360 / KCTC 9906 / NCIMB 13794 / A6) (Arthrobacter chlorophenolicus)).